Consider the following 330-residue polypeptide: Aspartate--ammonia ligase (330 aa).

This sequence belongs to the class-II aminoacyl-tRNA synthetase family. AsnA subfamily.

Its subcellular location is the cytoplasm. It catalyses the reaction L-aspartate + NH4(+) + ATP = L-asparagine + AMP + diphosphate + H(+). It functions in the pathway amino-acid biosynthesis; L-asparagine biosynthesis; L-asparagine from L-aspartate (ammonia route): step 1/1. In Salmonella agona (strain SL483), this protein is Aspartate--ammonia ligase.